The following is a 612-amino-acid chain: Dihydroxy-acid dehydratase (612 aa).

Asp-81 serves as a coordination point for Mg(2+). Residue Cys-122 participates in [2Fe-2S] cluster binding. Residues Asp-123 and Lys-124 each coordinate Mg(2+). Lys-124 is subject to N6-carboxylysine. Cys-195 serves as a coordination point for [2Fe-2S] cluster. Residue Glu-491 coordinates Mg(2+). Ser-517 acts as the Proton acceptor in catalysis.

Belongs to the IlvD/Edd family. In terms of assembly, homodimer. [2Fe-2S] cluster serves as cofactor. The cofactor is Mg(2+).

It catalyses the reaction (2R)-2,3-dihydroxy-3-methylbutanoate = 3-methyl-2-oxobutanoate + H2O. The enzyme catalyses (2R,3R)-2,3-dihydroxy-3-methylpentanoate = (S)-3-methyl-2-oxopentanoate + H2O. Its pathway is amino-acid biosynthesis; L-isoleucine biosynthesis; L-isoleucine from 2-oxobutanoate: step 3/4. The protein operates within amino-acid biosynthesis; L-valine biosynthesis; L-valine from pyruvate: step 3/4. Functions in the biosynthesis of branched-chain amino acids. Catalyzes the dehydration of (2R,3R)-2,3-dihydroxy-3-methylpentanoate (2,3-dihydroxy-3-methylvalerate) into 2-oxo-3-methylpentanoate (2-oxo-3-methylvalerate) and of (2R)-2,3-dihydroxy-3-methylbutanoate (2,3-dihydroxyisovalerate) into 2-oxo-3-methylbutanoate (2-oxoisovalerate), the penultimate precursor to L-isoleucine and L-valine, respectively. The chain is Dihydroxy-acid dehydratase from Rhizobium etli (strain ATCC 51251 / DSM 11541 / JCM 21823 / NBRC 15573 / CFN 42).